A 67-amino-acid chain; its full sequence is Large ribosomal subunit protein bL35 (67 aa).

Residues Met1–Val16 are compositionally biased toward basic residues. A disordered region spans residues Met1–Arg24.

This sequence belongs to the bacterial ribosomal protein bL35 family.

This chain is Large ribosomal subunit protein bL35, found in Verminephrobacter eiseniae (strain EF01-2).